The chain runs to 152 residues: Ribonuclease H (152 aa).

Residues 1–142 enclose the RNase H type-1 domain; that stretch reads MNSKVVIYTD…ADKLAVQGRE (142 aa). The Mg(2+) site is built by D10, E48, D70, and D134.

The protein belongs to the RNase H family. Monomer. Requires Mg(2+) as cofactor.

Its subcellular location is the cytoplasm. The enzyme catalyses Endonucleolytic cleavage to 5'-phosphomonoester.. Its function is as follows. Endonuclease that specifically degrades the RNA of RNA-DNA hybrids. In Rickettsia akari (strain Hartford), this protein is Ribonuclease H.